A 96-amino-acid polypeptide reads, in one-letter code: Probable quinol oxidase subunit 4 (96 aa).

The next 3 membrane-spanning stretches (helical) occupy residues 8 to 28 (TVGF…TLYT), 37 to 57 (TIIF…FMHL), and 68 to 88 (FKVI…YWVM).

It belongs to the cytochrome c oxidase bacterial subunit 4 family.

It localises to the cell membrane. It catalyses the reaction 2 a quinol + O2 = 2 a quinone + 2 H2O. Functionally, catalyzes quinol oxidation with the concomitant reduction of oxygen to water. This chain is Probable quinol oxidase subunit 4 (qoxD), found in Staphylococcus haemolyticus (strain JCSC1435).